Here is a 151-residue protein sequence, read N- to C-terminus: RNA polymerase-binding transcription factor DksA (151 aa).

Positions 34 to 54 (EAQLSHFKRILEAWRNQLRDE) form a coiled coil. Positions 114, 117, 135, and 138 each coordinate Zn(2+). The segment at 114–138 (CESCGVEIGIRRLEARPTADLCIDC) adopts a dksA C4-type zinc-finger fold.

It belongs to the DksA family. In terms of assembly, interacts directly with the RNA polymerase.

It localises to the cytoplasm. Functionally, transcription factor that acts by binding directly to the RNA polymerase (RNAP). Required for negative regulation of rRNA expression and positive regulation of several amino acid biosynthesis promoters. Also required for regulation of fis expression. The chain is RNA polymerase-binding transcription factor DksA from Salmonella typhi.